The sequence spans 189 residues: Putative lipoprotein LppK (189 aa).

A signal peptide spans 1–22 (MRRNIRVTLGAATIVAALGLSG). Cys23 is lipidated: N-palmitoyl cysteine. Cys23 is lipidated: S-diacylglycerol cysteine. Disordered regions lie at residues 26 to 49 (PEFK…LEAA) and 166 to 189 (MGNS…TPPG). Residues 169–179 (SPDSTPSATSP) are compositionally biased toward low complexity. Residues 180–189 (APAPSPTPPG) are compositionally biased toward pro residues.

Belongs to the MTB12 family.

It is found in the cell membrane. This Mycobacterium tuberculosis (strain CDC 1551 / Oshkosh) protein is Putative lipoprotein LppK (lppK).